The primary structure comprises 211 residues: RING finger protein narya (211 aa).

The segment at 6–47 (CNKCFRHRKTDPAVPFHLTQCRHVICGPCLGQSSLEKNCPLC) adopts an RING-type zinc-finger fold. The tract at residues 149-211 (RRRHSAGERF…FGSDTKGFRL (63 aa)) is disordered. Residues 153–165 (SAGERFHTPEFKE) show a composition bias toward basic and acidic residues. Residues 172–184 (STSDKSPSDMPSD) show a composition bias toward low complexity.

In terms of assembly, may interact with itself, with nenya and vilya through its RING-type zinc finger. As to expression, expressed in nurse cell and pro-oocytes (at protein level).

The protein localises to the chromosome. Functionally, required for the formation of DNA double-strand breaks (DSBs) together with nenya and vilya during the meiotic recombination process. Plays a role in DSBs processing into crossovers. Plays a redundant role with nenya in chromosome segregation during female meiosis. The chain is RING finger protein narya from Drosophila melanogaster (Fruit fly).